A 172-amino-acid polypeptide reads, in one-letter code: uncharacterized protein (172 aa).

A signal peptide spans 1–21; sequence MMKFKKCLLPVAMLASFTLAG. A lipid anchor (N-palmitoyl cysteine) is attached at Cys22. A lipid anchor (S-diacylglycerol cysteine) is attached at Cys22.

The protein localises to the cell membrane. This is an uncharacterized protein from Escherichia coli O157:H7.